Reading from the N-terminus, the 47-residue chain is Sperm protamine P1 (47 aa).

The protein belongs to the protamine P1 family. Testis.

The protein resides in the nucleus. Its subcellular location is the chromosome. In terms of biological role, protamines substitute for histones in the chromatin of sperm during the haploid phase of spermatogenesis. They compact sperm DNA into a highly condensed, stable and inactive complex. This chain is Sperm protamine P1 (PRM1), found in Orcinus orca (Killer whale).